The primary structure comprises 379 residues: uncharacterized protein (379 aa).

A helical membrane pass occupies residues Y9–A26.

To A.liquefaciens L-sorbosone dehydrogenase.

It localises to the membrane. This is an uncharacterized protein from Borreliella burgdorferi (strain ATCC 35210 / DSM 4680 / CIP 102532 / B31) (Borrelia burgdorferi).